Here is a 35-residue protein sequence, read N- to C-terminus: MEALVYTFLLVSTLGIIFFAIFFREPPKVPTKKIK.

Residues 3–23 traverse the membrane as a helical segment; it reads ALVYTFLLVSTLGIIFFAIFF.

This sequence belongs to the PsbT family. In terms of assembly, PSII is composed of 1 copy each of membrane proteins PsbA, PsbB, PsbC, PsbD, PsbE, PsbF, PsbH, PsbI, PsbJ, PsbK, PsbL, PsbM, PsbT, PsbY, PsbZ, Psb30/Ycf12, at least 3 peripheral proteins of the oxygen-evolving complex and a large number of cofactors. It forms dimeric complexes.

The protein resides in the plastid. Its subcellular location is the chloroplast thylakoid membrane. In terms of biological role, found at the monomer-monomer interface of the photosystem II (PS II) dimer, plays a role in assembly and dimerization of PSII. PSII is a light-driven water plastoquinone oxidoreductase, using light energy to abstract electrons from H(2)O, generating a proton gradient subsequently used for ATP formation. The protein is Photosystem II reaction center protein T of Gunnera chilensis (Chilean rhubarb).